The sequence spans 128 residues: Histone H2A type 1-J (128 aa).

Residues Met1–Ala22 form a disordered region. Ser2 bears the N-acetylserine mark. Phosphoserine; by RPS6KA5 is present on Ser2. Residue Arg4 is modified to Citrulline; alternate. The residue at position 4 (Arg4) is a Symmetric dimethylarginine; by PRMT5; alternate. Position 6 is an N6-(2-hydroxyisobutyryl)lysine (Lys6). Positions Gln7–Ser19 are enriched in basic residues. Lys10 is modified (N6-(2-hydroxyisobutyryl)lysine; alternate). Residues Lys10 and Lys14 each carry the N6-(beta-hydroxybutyryl)lysine; alternate modification. The residue at position 10 (Lys10) is an N6-lactoyllysine; alternate. Lys10 carries the N6-succinyllysine; alternate modification. Lys14 is covalently cross-linked (Glycyl lysine isopeptide (Lys-Gly) (interchain with G-Cter in ubiquitin); alternate). Lys16 is covalently cross-linked (Glycyl lysine isopeptide (Lys-Gly) (interchain with G-Cter in ubiquitin)). Lys37 is modified (N6-(2-hydroxyisobutyryl)lysine; alternate). N6-(beta-hydroxybutyryl)lysine; alternate is present on Lys37. Lys37 is subject to N6-crotonyllysine; alternate. Residues Lys75 and Lys76 each carry the N6-(2-hydroxyisobutyryl)lysine modification. Lys96 carries the N6-(2-hydroxyisobutyryl)lysine; alternate modification. Lys96 carries the post-translational modification N6-(beta-hydroxybutyryl)lysine; alternate. Lys96 carries the N6-succinyllysine; alternate modification. Lys96 carries the post-translational modification N6-glutaryllysine; alternate. N6-glutaryllysine is present on Lys100. Gln105 bears the N5-methylglutamine mark. At Lys119 the chain carries N6-(2-hydroxyisobutyryl)lysine; alternate. N6-(beta-hydroxybutyryl)lysine; alternate is present on Lys119. An N6-crotonyllysine; alternate mark is found at Lys119 and Lys120. N6-glutaryllysine; alternate occurs at positions 119 and 120. Lys120 participates in a covalent cross-link: Glycyl lysine isopeptide (Lys-Gly) (interchain with G-Cter in ubiquitin); alternate. A Phosphothreonine; by DCAF1 modification is found at Thr121. At Lys126 the chain carries N6-crotonyllysine; alternate. An N6-glutaryllysine; alternate modification is found at Lys126.

Belongs to the histone H2A family. As to quaternary structure, the nucleosome is a histone octamer containing two molecules each of H2A, H2B, H3 and H4 assembled in one H3-H4 heterotetramer and two H2A-H2B heterodimers. The octamer wraps approximately 147 bp of DNA. Post-translationally, deiminated on Arg-4 in granulocytes upon calcium entry. In terms of processing, monoubiquitination of Lys-120 (H2AK119Ub) by RING1, TRIM37 and RNF2/RING2 complex gives a specific tag for epigenetic transcriptional repression and participates in X chromosome inactivation of female mammals. It is involved in the initiation of both imprinted and random X inactivation. Ubiquitinated H2A is enriched in inactive X chromosome chromatin. Ubiquitination of H2A functions downstream of methylation of 'Lys-27' of histone H3 (H3K27me). H2AK119Ub by RNF2/RING2 can also be induced by ultraviolet and may be involved in DNA repair. Monoubiquitination of Lys-120 (H2AK119Ub) by TRIM37 may promote transformation of cells in a number of breast cancers. Following DNA double-strand breaks (DSBs), it is ubiquitinated through 'Lys-63' linkage of ubiquitin moieties by the E2 ligase UBE2N and the E3 ligases RNF8 and RNF168, leading to the recruitment of repair proteins to sites of DNA damage. Ubiquitination at Lys-14 and Lys-16 (H2AK13Ub and H2AK15Ub, respectively) in response to DNA damage is initiated by RNF168 that mediates monoubiquitination at these 2 sites, and 'Lys-63'-linked ubiquitin are then conjugated to monoubiquitin; RNF8 is able to extend 'Lys-63'-linked ubiquitin chains in vitro. Deubiquitinated by USP51 at Lys-14 and Lys-16 (H2AK13Ub and H2AK15Ub, respectively) after damaged DNA is repaired. H2AK119Ub and ionizing radiation-induced 'Lys-63'-linked ubiquitination (H2AK13Ub and H2AK15Ub) are distinct events. Phosphorylation on Ser-2 (H2AS1ph) is enhanced during mitosis. Phosphorylation on Ser-2 by RPS6KA5/MSK1 directly represses transcription. Acetylation of H3 inhibits Ser-2 phosphorylation by RPS6KA5/MSK1. Phosphorylation at Thr-121 (H2AT120ph) by DCAF1 is present in the regulatory region of many tumor suppresor genes and down-regulates their transcription. Post-translationally, glutamine methylation at Gln-105 (H2AQ104me) by FBL is specifically dedicated to polymerase I. It is present at 35S ribosomal DNA locus and impairs binding of the FACT complex. In terms of processing, symmetric dimethylation on Arg-4 by the PRDM1/PRMT5 complex may play a crucial role in the germ-cell lineage. Crotonylation (Kcr) is specifically present in male germ cells and marks testis-specific genes in post-meiotic cells, including X-linked genes that escape sex chromosome inactivation in haploid cells. Crotonylation marks active promoters and enhancers and confers resistance to transcriptional repressors. It is also associated with post-meiotically activated genes on autosomes. Post-translationally, lactylated in macrophages by EP300/P300 by using lactoyl-CoA directly derived from endogenous or exogenous lactate, leading to stimulates gene transcription.

Its subcellular location is the nucleus. The protein resides in the chromosome. Its function is as follows. Core component of nucleosome. Nucleosomes wrap and compact DNA into chromatin, limiting DNA accessibility to the cellular machineries which require DNA as a template. Histones thereby play a central role in transcription regulation, DNA repair, DNA replication and chromosomal stability. DNA accessibility is regulated via a complex set of post-translational modifications of histones, also called histone code, and nucleosome remodeling. The protein is Histone H2A type 1-J of Homo sapiens (Human).